The sequence spans 357 residues: Carbamoyl phosphate synthase small chain (357 aa).

Residues 1–168 are CPSase; sequence MSKRLLILED…STTTAYPSPN (168 aa). The L-glutamine site is built by S46, G220, and G222. The 186-residue stretch at 172 to 357 folds into the Glutamine amidotransferase type-1 domain; the sequence is KVVVVDFGLK…FMDLMDNFKK (186 aa). The active-site Nucleophile is C247. The L-glutamine site is built by L248, Q251, N289, G291, and Y292. Residues H331 and D333 contribute to the active site.

This sequence belongs to the CarA family. Composed of two chains; the small (or glutamine) chain promotes the hydrolysis of glutamine to ammonia, which is used by the large (or ammonia) chain to synthesize carbamoyl phosphate. Tetramer of heterodimers (alpha,beta)4.

It carries out the reaction hydrogencarbonate + L-glutamine + 2 ATP + H2O = carbamoyl phosphate + L-glutamate + 2 ADP + phosphate + 2 H(+). It catalyses the reaction L-glutamine + H2O = L-glutamate + NH4(+). It functions in the pathway amino-acid biosynthesis; L-arginine biosynthesis; carbamoyl phosphate from bicarbonate: step 1/1. Its pathway is pyrimidine metabolism; UMP biosynthesis via de novo pathway; (S)-dihydroorotate from bicarbonate: step 1/3. Small subunit of the glutamine-dependent carbamoyl phosphate synthetase (CPSase). CPSase catalyzes the formation of carbamoyl phosphate from the ammonia moiety of glutamine, carbonate, and phosphate donated by ATP, constituting the first step of 2 biosynthetic pathways, one leading to arginine and/or urea and the other to pyrimidine nucleotides. The small subunit (glutamine amidotransferase) binds and cleaves glutamine to supply the large subunit with the substrate ammonia. The sequence is that of Carbamoyl phosphate synthase small chain from Lactococcus lactis subsp. lactis (strain IL1403) (Streptococcus lactis).